Consider the following 551-residue polypeptide: UvrABC system protein C (551 aa).

Residues 12-87 (EKPGVYIFKN…IFKHKPKYNI (76 aa)) form the GIY-YIG domain. One can recognise a UVR domain in the interval 193–228 (EFVKDYIEQKMNYHSKMLDFENAAKYRDLLLSFEKL).

It belongs to the UvrC family. As to quaternary structure, interacts with UvrB in an incision complex.

The protein localises to the cytoplasm. Its function is as follows. The UvrABC repair system catalyzes the recognition and processing of DNA lesions. UvrC both incises the 5' and 3' sides of the lesion. The N-terminal half is responsible for the 3' incision and the C-terminal half is responsible for the 5' incision. In Thermosipho africanus (strain TCF52B), this protein is UvrABC system protein C.